The following is a 39-amino-acid chain: uncharacterized protein (39 aa).

Over residues 1–16 (MLNIQPTQSIVNNQPK) the composition is skewed to polar residues. The segment at 1 to 39 (MLNIQPTQSIVNNQPKSDQKKQKPADLLKEFYDKTGNRN) is disordered. Positions 17 to 39 (SDQKKQKPADLLKEFYDKTGNRN) are enriched in basic and acidic residues.

This is an uncharacterized protein from Dictyostelium discoideum (Social amoeba).